The chain runs to 209 residues: Large ribosomal subunit protein uL3 (209 aa).

Residues 127-152 (SGGPSSHGSKFHRHLGSTGQAATPSR) form a disordered region. Residues 143 to 152 (STGQAATPSR) are compositionally biased toward polar residues.

It belongs to the universal ribosomal protein uL3 family. Part of the 50S ribosomal subunit. Forms a cluster with proteins L14 and L19.

Functionally, one of the primary rRNA binding proteins, it binds directly near the 3'-end of the 23S rRNA, where it nucleates assembly of the 50S subunit. This Borrelia hermsii (strain HS1 / DAH) protein is Large ribosomal subunit protein uL3.